Reading from the N-terminus, the 485-residue chain is Glutamyl-tRNA(Gln) amidotransferase subunit A (485 aa).

Residues K79 and S154 each act as charge relay system in the active site. Residue S178 is the Acyl-ester intermediate of the active site.

Belongs to the amidase family. GatA subfamily. Heterotrimer of A, B and C subunits.

The enzyme catalyses L-glutamyl-tRNA(Gln) + L-glutamine + ATP + H2O = L-glutaminyl-tRNA(Gln) + L-glutamate + ADP + phosphate + H(+). Functionally, allows the formation of correctly charged Gln-tRNA(Gln) through the transamidation of misacylated Glu-tRNA(Gln) in organisms which lack glutaminyl-tRNA synthetase. The reaction takes place in the presence of glutamine and ATP through an activated gamma-phospho-Glu-tRNA(Gln). This chain is Glutamyl-tRNA(Gln) amidotransferase subunit A, found in Staphylococcus aureus (strain USA300 / TCH1516).